Consider the following 193-residue polypeptide: Penicillin-binding protein activator LpoB (193 aa).

Residues 1-16 (MKKYLGVILAALVLTG) form the signal peptide. The N-palmitoyl cysteine moiety is linked to residue Cys-17. Cys-17 carries S-diacylglycerol cysteine lipidation. The disordered stretch occupies residues 17 to 55 (CPSRPPEPTEPPATIEPVEPQVPTTPTLPPGESVPQPPK). A compositionally biased stretch (low complexity) spans 28–41 (PATIEPVEPQVPTT).

Belongs to the LpoB family. Interacts with PBP1b.

It is found in the cell outer membrane. Regulator of peptidoglycan synthesis that is essential for the function of penicillin-binding protein 1B (PBP1b). The protein is Penicillin-binding protein activator LpoB of Pectobacterium carotovorum subsp. carotovorum (strain PC1).